A 537-amino-acid chain; its full sequence is MQETGIRNGAFGADKFGLKNLKQVHWNLGAPQLYQYSLAAGEAVLSANGALCADTGEFTGRSPKDKFTVRDASTEKMWWAGNQSITAEQFEALYQDFLKHAEGKTLFAQDLYGGADPTFRIKTRVFTELAWHSLFIRTLLIRPEKIELDTFVPELTIIDMPSFRADPKRHGVRSQNVVAIDFARKIVLIGGSYYAGEMKKSVFTTLNYYLPERGVMPMHCSANVGPKGDTAIFFGLSGTGKTTLSADPNRTLIGDDEHGWGPSGVFNFEGGCYAKCIKLSQEAEPQIFAASNRFGAVLENVVLDEDSRVPDFDDGSKTENTRSAYPLDYIPNASRTGRAPHPKNVVMLAADAFGVLPPIAKLSPAQAMYHFLSGYTAKVAGTERGLGNEPQPEFSTCFGSPFLPLDPSVYGNMLRQLIAEHNVDCWLVNTGWTGGKYGTGSRMPIKVTRALLTAALDGSLRNVEFRTDKYFGFAVPTALPGVPSEILDPVNTWADKAEFDKTARALVGMFQKNFAKFEAQVDADVRAAAPDVKLAAE.

Residues Arg61, Tyr194, and Lys200 each coordinate substrate. ATP is bound by residues Lys200, His219, and 235–243; that span reads GLSGTGKTT. Mn(2+) is bound by residues Lys200 and His219. Position 256 (Asp256) interacts with Mn(2+). Glu284, Arg322, and Thr448 together coordinate ATP. Residue Arg322 coordinates substrate.

Belongs to the phosphoenolpyruvate carboxykinase (ATP) family. Mn(2+) serves as cofactor.

It is found in the cytoplasm. The catalysed reaction is oxaloacetate + ATP = phosphoenolpyruvate + ADP + CO2. It functions in the pathway carbohydrate biosynthesis; gluconeogenesis. Functionally, involved in the gluconeogenesis. Catalyzes the conversion of oxaloacetate (OAA) to phosphoenolpyruvate (PEP) through direct phosphoryl transfer between the nucleoside triphosphate and OAA. This is Phosphoenolpyruvate carboxykinase (ATP) from Bradyrhizobium sp. (strain BTAi1 / ATCC BAA-1182).